Here is a 136-residue protein sequence, read N- to C-terminus: Large ribosomal subunit protein uL16 (136 aa).

The protein belongs to the universal ribosomal protein uL16 family. In terms of assembly, part of the 50S ribosomal subunit.

Binds 23S rRNA and is also seen to make contacts with the A and possibly P site tRNAs. This is Large ribosomal subunit protein uL16 from Actinobacillus succinogenes (strain ATCC 55618 / DSM 22257 / CCUG 43843 / 130Z).